The following is a 378-amino-acid chain: tRNA-specific 2-thiouridylase MnmA (378 aa).

ATP-binding positions include 9–16 (GVSGGVDS) and Met35. An interaction with target base in tRNA region spans residues 94–96 (NPD). Catalysis depends on Cys99, which acts as the Nucleophile. Cys99 and Cys195 are joined by a disulfide. Gly123 lines the ATP pocket. Residues 145-147 (KDQ) are interaction with tRNA. The active-site Cysteine persulfide intermediate is Cys195. Residues 307-308 (RY) are interaction with tRNA.

Belongs to the MnmA/TRMU family.

It localises to the cytoplasm. The enzyme catalyses S-sulfanyl-L-cysteinyl-[protein] + uridine(34) in tRNA + AH2 + ATP = 2-thiouridine(34) in tRNA + L-cysteinyl-[protein] + A + AMP + diphosphate + H(+). Its function is as follows. Catalyzes the 2-thiolation of uridine at the wobble position (U34) of tRNA, leading to the formation of s(2)U34. The protein is tRNA-specific 2-thiouridylase MnmA of Xanthomonas axonopodis pv. citri (strain 306).